Reading from the N-terminus, the 555-residue chain is Glutamine--tRNA ligase (555 aa).

Positions 34–44 (PEPNGYLHIGH) match the 'HIGH' region motif. ATP-binding positions include 35-37 (EPN) and 41-47 (HIGHAKS). Aspartate 67 and tyrosine 212 together coordinate L-glutamine. Residues threonine 231, 261–262 (RL), and 269–271 (MSK) contribute to the ATP site. The 'KMSKS' region motif lies at 268-272 (IMSKR).

Belongs to the class-I aminoacyl-tRNA synthetase family. As to quaternary structure, monomer.

The protein localises to the cytoplasm. It catalyses the reaction tRNA(Gln) + L-glutamine + ATP = L-glutaminyl-tRNA(Gln) + AMP + diphosphate. This chain is Glutamine--tRNA ligase, found in Erwinia tasmaniensis (strain DSM 17950 / CFBP 7177 / CIP 109463 / NCPPB 4357 / Et1/99).